Reading from the N-terminus, the 275-residue chain is Phosphonoacetaldehyde hydrolase (275 aa).

The active-site Nucleophile is aspartate 15. Mg(2+) is bound by residues aspartate 15 and alanine 17. Catalysis depends on lysine 56, which acts as the Schiff-base intermediate with substrate. Residue aspartate 189 coordinates Mg(2+).

The protein belongs to the HAD-like hydrolase superfamily. PhnX family. As to quaternary structure, homodimer. Mg(2+) is required as a cofactor.

It carries out the reaction phosphonoacetaldehyde + H2O = acetaldehyde + phosphate + H(+). Functionally, involved in phosphonate degradation. This chain is Phosphonoacetaldehyde hydrolase, found in Pseudomonas putida (strain ATCC 700007 / DSM 6899 / JCM 31910 / BCRC 17059 / LMG 24140 / F1).